The primary structure comprises 130 residues: D-ribose pyranase (130 aa).

His20 acts as the Proton donor in catalysis. Residues Asp28, His97, and 119-121 (YAN) each bind substrate.

This sequence belongs to the RbsD / FucU family. RbsD subfamily. Homodecamer.

It is found in the cytoplasm. The enzyme catalyses beta-D-ribopyranose = beta-D-ribofuranose. It participates in carbohydrate metabolism; D-ribose degradation; D-ribose 5-phosphate from beta-D-ribopyranose: step 1/2. Functionally, catalyzes the interconversion of beta-pyran and beta-furan forms of D-ribose. In Heliobacterium modesticaldum (strain ATCC 51547 / Ice1), this protein is D-ribose pyranase.